Consider the following 295-residue polypeptide: CRISPR system Cmr endoribonuclease Cmr4 (295 aa).

Belongs to the CRISPR system Cmr4 family. Forms oligomers in isolation. Part of the type III-B Cmr ribonucleoprotein (RNP) complex, an elongated RNP with Cmr2 and Cmr3 as the base, with Cmr4 and Cmr5 forming a helical core along the mature crRNA (39 or 45 nt in length), while the complex is capped by Cmr6 and Cmr1. The 5' end of the crRNA is bound to Cmr2 and Cmr3, while Cmr6 and a Cmr1 subunit (Cmr1-1 or Cmr1-2) cap the 3' end of the crRNA. The target RNA lies anti-parallel to the crRNA, with its 5' end near Cmr1 and Cmr6 and its 3' end near Cmr2 and Cmr3; major target RNA cleavage occurs nears the junction of Cmr1/Cmr6 and Cmr4/Cmr5, with minor cleavage occurring at 6 nt intervals which coincide with the proposed spacing of Cmr4 subunits. Interacts with Cmr5. Interacts with Cmr2, Cmr3, Cmr5 and Cmr6.

It localises to the cytoplasm. Functionally, CRISPR (clustered regularly interspaced short palindromic repeat), is an adaptive immune system that provides protection against mobile genetic elements (viruses, transposable elements and conjugative plasmids). CRISPR clusters contain sequences complementary to antecedent mobile elements and target invading nucleic acids. CRISPR clusters are transcribed and processed into CRISPR RNA (crRNA), formerly called psiRNA (prokaryotic silencing) in this organism. Part of the Cmr ribonucleoprotein complex which has divalent cation-dependent endoribonuclease activity specific for ssRNA complementary to the crRNA (target RNA), generating 5' hydroxy- and 3' phosphate or 2'-3' cyclic phosphate termini. This is probably the subunit that cleaves the target RNA. Cmr complex does not cleave ssDNA complementary to the crRNA. Cleavage of target RNA is guided by the crRNA; substrate cleavage occurs a fixed distance (14 nt) from the 3' end of the crRNA. In vitro reconstitution shows Cmr1-2 and Cmr5 are not absolutely necessary for target cleavage. This Pyrococcus furiosus (strain ATCC 43587 / DSM 3638 / JCM 8422 / Vc1) protein is CRISPR system Cmr endoribonuclease Cmr4.